We begin with the raw amino-acid sequence, 542 residues long: Neurofilament light polypeptide (542 aa).

Position 2 is an N-acetylserine (Ser2). A head region spans residues 2–93 (SSFSYEPYFS…KSIRTQEKAQ (92 aa)). O-linked (GlcNAc) threonine glycosylation is present at Thr21. Arg23 carries the asymmetric dimethylarginine; alternate modification. The residue at position 23 (Arg23) is an Omega-N-methylarginine; alternate. Ser27 is a glycosylation site (O-linked (GlcNAc) serine). Residue Arg30 is modified to Omega-N-methylarginine. A Phosphotyrosine modification is found at Tyr43. Ser56, Ser67, and Ser103 each carry phosphoserine. The IF rod domain occupies 90-401 (EKAQLQDLND…KLLEGEETRL (312 aa)). Positions 94-125 (LQDLNDRFASFIERVHELEQQNKVLEAELLVL) are coil 1A. A linker 1 region spans residues 126 to 138 (RQKHSEPSRFRAL). The tract at residues 139–234 (YEQEIRDLRL…KVHEEEIAEL (96 aa)) is coil 1B. Positions 235-253 (QAQIQYAQISVEMDVSSKP) are linker 12. The coil 2A stretch occupies residues 254 to 272 (DLSAALKDIRAQYEKLAAK). The tract at residues 273–281 (NMQNAEEWF) is linker 2. Residues 282 to 397 (KSRFTVLTES…AAYRKLLEGE (116 aa)) are coil 2B. An epitope; recognized by IF-specific monoclonal antibody region spans residues 382–392 (ALDIEIAAYRK). Positions 398-444 (ETRLSFTSVGSITSGYSQSSQVFGRSAYSGLQSSSYLMSARAFPAYY) are tail, subdomain A. Positions 398 to 542 (ETRLSFTSVG…GEEQAAKKKD (145 aa)) are tail. Positions 445–542 (TSHVQEEQSE…GEEQAAKKKD (98 aa)) are tail, subdomain B (acidic). The segment at 451–542 (EQSEVEETIE…GEEQAAKKKD (92 aa)) is disordered. Ser453 carries the post-translational modification Phosphoserine. Basic and acidic residues predominate over residues 460–471 (EATKAEEAKDEP). Positions 472–527 (PSEGEAEEEEKEKEEGEEEEGAEEEEAAKDESEDAKEEEGGEGEEEDTKESEEEEK) are enriched in acidic residues. Residues Ser473 and Ser503 each carry the phosphoserine modification. Residue Thr519 is modified to Phosphothreonine. Ser522 and Ser531 each carry phosphoserine. Positions 528–542 (KEESAGEEQAAKKKD) are enriched in basic and acidic residues.

It belongs to the intermediate filament family. As to quaternary structure, forms homodimers (in vitro). Forms heterodimers with NEFH or NEFM; which can further hetero-oligomerize (in vitro). Forms heterodimers with INA (in vitro). Interacts with ARHGEF28. Interacts with TRIM2. Post-translationally, O-glycosylated; contains three N-acetylglucosamine side chains. In terms of processing, phosphorylated in the head and rod regions by the PKC kinase PKN1, leading to the inhibition of polymerization. Ubiquitinated in the presence of TRIM2 and UBE2D1. In terms of tissue distribution, expressed in the dorsal root ganglion neurons (at protein level).

Its subcellular location is the cell projection. The protein localises to the axon. It localises to the cytoplasm. The protein resides in the cytoskeleton. Its function is as follows. Neurofilaments usually contain three intermediate filament proteins: NEFL, NEFM, and NEFH which are involved in the maintenance of neuronal caliber. May additionally cooperate with the neuronal intermediate filament proteins PRPH and INA to form neuronal filamentous networks. The chain is Neurofilament light polypeptide (Nefl) from Rattus norvegicus (Rat).